Consider the following 508-residue polypeptide: Histidine--tRNA ligase, cytoplasmic (508 aa).

Residues 3–59 (SPALEELVLNSRHRLVRGLKQQKASADQIEEEVAKLLKLKAQLGHDESKQKFVLKTP) form the WHEP-TRS domain. Ser66 carries the post-translational modification Phosphoserine. L-histidine is bound by residues 130 to 132 (DLT), Arg157, Asp177, Arg326, and 330 to 331 (YY).

This sequence belongs to the class-II aminoacyl-tRNA synthetase family. Homodimer.

It localises to the cytoplasm. The enzyme catalyses tRNA(His) + L-histidine + ATP = L-histidyl-tRNA(His) + AMP + diphosphate + H(+). Its function is as follows. Catalyzes the ATP-dependent ligation of histidine to the 3'-end of its cognate tRNA, via the formation of an aminoacyl-adenylate intermediate (His-AMP). Plays a role in axon guidance. The sequence is that of Histidine--tRNA ligase, cytoplasmic (HARS1) from Mesocricetus auratus (Golden hamster).